The sequence spans 362 residues: Protein RecA (362 aa).

An ATP-binding site is contributed by 77–84 (GPESSGKT).

Belongs to the RecA family.

Its subcellular location is the cytoplasm. Can catalyze the hydrolysis of ATP in the presence of single-stranded DNA, the ATP-dependent uptake of single-stranded DNA by duplex DNA, and the ATP-dependent hybridization of homologous single-stranded DNAs. It interacts with LexA causing its activation and leading to its autocatalytic cleavage. The chain is Protein RecA from Rhizobium etli (strain ATCC 51251 / DSM 11541 / JCM 21823 / NBRC 15573 / CFN 42).